Consider the following 141-residue polypeptide: uncharacterized protein (141 aa).

This sequence belongs to the PhzA/PhzB family.

This is an uncharacterized protein from Pseudomonas aeruginosa (strain ATCC 15692 / DSM 22644 / CIP 104116 / JCM 14847 / LMG 12228 / 1C / PRS 101 / PAO1).